Reading from the N-terminus, the 209-residue chain is Ribosomal RNA large subunit methyltransferase E (209 aa).

S-adenosyl-L-methionine-binding residues include Gly60, Trp62, Asp80, Asp96, and Asp121. The Proton acceptor role is filled by Lys161.

Belongs to the class I-like SAM-binding methyltransferase superfamily. RNA methyltransferase RlmE family.

The protein resides in the cytoplasm. The catalysed reaction is uridine(2552) in 23S rRNA + S-adenosyl-L-methionine = 2'-O-methyluridine(2552) in 23S rRNA + S-adenosyl-L-homocysteine + H(+). Its function is as follows. Specifically methylates the uridine in position 2552 of 23S rRNA at the 2'-O position of the ribose in the fully assembled 50S ribosomal subunit. In Pseudomonas fluorescens (strain Pf0-1), this protein is Ribosomal RNA large subunit methyltransferase E.